A 92-amino-acid chain; its full sequence is Elongation factor 1-beta (92 aa).

Belongs to the EF-1-beta/EF-1-delta family.

Promotes the exchange of GDP for GTP in EF-1-alpha/GDP, thus allowing the regeneration of EF-1-alpha/GTP that could then be used to form the ternary complex EF-1-alpha/GTP/AAtRNA. The chain is Elongation factor 1-beta from Pyrobaculum neutrophilum (strain DSM 2338 / JCM 9278 / NBRC 100436 / V24Sta) (Thermoproteus neutrophilus).